Here is a 373-residue protein sequence, read N- to C-terminus: C-C chemokine receptor type 2 (373 aa).

Residues 1 to 55 (MEDNNMLPQFIHGILSTSHSLFTRSIQELDEGATTPYDYDDGEPCHKTSVKQIGA) lie on the Extracellular side of the membrane. Residues 56–83 (WILPPLYSLVFIFGFVGNMLVIIILIGC) form a helical membrane-spanning segment. Residues 84–93 (KKLKSMTDIY) lie on the Cytoplasmic side of the membrane. The helical transmembrane segment at 94 to 114 (LLNLAISDLLFLLTLPFWAHY) threads the bilayer. Topologically, residues 115–127 (AANEWVFGNIMCK) are extracellular. A disulfide bridge connects residues C126 and C203. The helical transmembrane segment at 128–149 (VFTGLYHIGYFGGIFFIILLTI) threads the bilayer. Topologically, residues 150–166 (DRYLAIVHAVFALKART) are cytoplasmic. Y152 is modified (phosphotyrosine; by JAK2). A helical transmembrane segment spans residues 167 to 191 (VTFGVITSVVTWVVAVFASLPGIIF). Over 192 to 219 (TKSKQDDHHYTCGPYFTQLWKNFQTIMR) the chain is Extracellular. A helical membrane pass occupies residues 220–239 (NILSLILPLLVMVICYSGIL). At 240 to 256 (HTLFRCRNEKKRHRAVR) the chain is on the cytoplasmic side. The chain crosses the membrane as a helical span at residues 257-281 (LIFAIMIVYFLFWTPYNIVLFLTTF). The Extracellular segment spans residues 282–298 (QESLGMSNCVIDKHLDQ). A helical membrane pass occupies residues 299–322 (AMQVTETLGMTHCCINPVIYAFVG). The Cytoplasmic segment spans residues 323 to 373 (EKFRRYLSIFFRKHIAKRLCKQCPVFYRETADRVSSTFTPSTGEQEVSVGL).

Belongs to the G-protein coupled receptor 1 family. Interacts with ARRB1. Interacts (via extracellular N-terminal region) with beta-defensin DEFB106A/DEFB106B; this interaction may preferentially require specific tyrosine sulfation on CCR2. Interacts with NUP85; the interaction is required for CCR2 clusters formation on the cell membrane and CCR2 signaling. In terms of processing, N-glycosylated. Post-translationally, sulfation increases the affinity for both monomeric and dimeric CCL2 with stronger binding to the monomeric form. Binding of sulfated CCR2 to CCL2 promotes conversion of CCL2 from dimer to monomer. As to expression, epressed in mature thymocytes. Detected in monocyte/macrophage cell lines, but not in nonhematopoietic cell lines.

Its subcellular location is the cell membrane. Key functional receptor for CCL2 but can also bind CCL7 and CCL12 chemokines. Its binding with CCL2 on monocytes and macrophages mediates chemotaxis and migration induction through the activation of the PI3K cascade, the small G protein Rac and lamellipodium protrusion. Also acts as a receptor for the beta-defensin DEFB106A/DEFB106B. Regulates the expression of T-cell inflammatory cytokines and T-cell differentiation, promoting the differentiation of T-cells into T-helper 17 cells (Th17) during inflammation. Facilitates the export of mature thymocytes by enhancing directional movement of thymocytes to sphingosine-1-phosphate stimulation and up-regulation of S1P1R expression; signals through the JAK-STAT pathway to regulate FOXO1 activity leading to an increased expression of S1P1R. Plays an important role in mediating peripheral nerve injury-induced neuropathic pain. Increases NMDA-mediated synaptic transmission in both dopamine D1 and D2 receptor-containing neurons, which may be caused by MAPK/ERK-dependent phosphorylation of GRIN2B/NMDAR2B. Mediates the recruitment of macrophages and monocytes to the injury site following brain injury. The polypeptide is C-C chemokine receptor type 2 (Ccr2) (Mus musculus (Mouse)).